Consider the following 274-residue polypeptide: Receptor-like protein 44 (274 aa).

An N-terminal signal peptide occupies residues 1–24 (MTRSHRLLLLLLLIFQTAQRLTTA). The Extracellular portion of the chain corresponds to 25 to 223 (DPNDEACLKN…PLQEMMMKSK (199 aa)). 3 N-linked (GlcNAc...) asparagine glycosylation sites follow: N48, N82, and N95. LRR repeat units lie at residues 96–121 (CTNLQSLDLSSNQISGVIPPEIQYLV), 123–144 (LAVLNLSSNHLSGEITPQLALC), 145–168 (AYLNVIDLHDNELSGQIPQQLGLL), and 169–192 (ARLSAFDVSNNKLSGQIPTYLSNR). N-linked (GlcNAc...) asparagine glycosylation occurs at N127. N191 and N200 each carry an N-linked (GlcNAc...) asparagine glycan. A helical membrane pass occupies residues 224–244 (GLSVMAIVGIGLGSGIASLMI). The Cytoplasmic segment spans residues 245–274 (SFTGVCLWLRITEKKIVEEEGKISQSMPDY).

This sequence belongs to the RLP family.

It is found in the cell membrane. In Arabidopsis thaliana (Mouse-ear cress), this protein is Receptor-like protein 44.